The following is a 472-amino-acid chain: Interferon-induced protein with tetratricopeptide repeats 2 (472 aa).

An N-acetylserine modification is found at Ser2. TPR repeat units lie at residues Ala51–Ala89, Glu90–Ser135, Pro136–Asn171, Pro172–Asn208, Thr247–Asn280, Ala281–Arg335, Val336–Thr366, Pro367–Ser405, and Arg406–Gln448. Residues Met446–Glu472 are disordered. Positions Leu462–Glu472 are enriched in polar residues.

It belongs to the IFIT family. In terms of assembly, domain-swapped homodimer. Component of an interferon-dependent multiprotein complex, at least composed of IFIT1, IFIT2 and IFIT3. Interacts with IFIT1 and IFIT3. Interacts with STING1/MITA and disrupts its interaction with MAVS or TBK1. Interacts with EIF3E and EIF3C.

The protein localises to the cytoplasm. The protein resides in the endoplasmic reticulum. IFN-induced antiviral protein which inhibits expression of viral messenger RNAs lacking 2'-O-methylation of the 5' cap. The ribose 2'-O-methylation would provide a molecular signature to distinguish between self and non-self mRNAs by the host during viral infection. Viruses evolved several ways to evade this restriction system such as encoding their own 2'-O-methylase for their mRNAs or by stealing host cap containing the 2'-O-methylation (cap snatching mechanism). Binds AU-rich viral RNAs, with or without 5' triphosphorylation, RNA-binding is required for antiviral activity. Can promote apoptosis. The chain is Interferon-induced protein with tetratricopeptide repeats 2 (IFIT2) from Homo sapiens (Human).